The sequence spans 147 residues: 3-dehydroquinate dehydratase (147 aa).

Tyr24 functions as the Proton acceptor in the catalytic mechanism. Substrate-binding residues include Asn74, His80, and Asp87. His100 acts as the Proton donor in catalysis. Substrate-binding positions include 101-102 and Arg111; that span reads LS.

This sequence belongs to the type-II 3-dehydroquinase family. In terms of assembly, homododecamer.

The catalysed reaction is 3-dehydroquinate = 3-dehydroshikimate + H2O. It participates in metabolic intermediate biosynthesis; chorismate biosynthesis; chorismate from D-erythrose 4-phosphate and phosphoenolpyruvate: step 3/7. In terms of biological role, catalyzes a trans-dehydration via an enolate intermediate. This is 3-dehydroquinate dehydratase from Azorhizobium caulinodans (strain ATCC 43989 / DSM 5975 / JCM 20966 / LMG 6465 / NBRC 14845 / NCIMB 13405 / ORS 571).